A 432-amino-acid polypeptide reads, in one-letter code: uncharacterized protein (432 aa).

SIS domains lie at 105 to 244 (WLTE…DLVS) and 277 to 422 (CDKK…VDLP).

This is an uncharacterized protein from Saccharomyces cerevisiae (strain ATCC 204508 / S288c) (Baker's yeast).